A 54-amino-acid polypeptide reads, in one-letter code: Beta-2-microglobulin (54 aa).

In terms of domain architecture, Ig-like C1-type spans 3 to 41; it reads KVELSDLSFNKDWSFYLLAHREFVPTATDKYACRVSHIT.

This sequence belongs to the beta-2-microglobulin family. Heterodimer of an alpha chain and a beta chain. Beta-2-microglobulin is the beta-chain of major histocompatibility complex class I molecules.

Its subcellular location is the secreted. Functionally, component of the class I major histocompatibility complex (MHC). Involved in the presentation of peptide antigens to the immune system. The sequence is that of Beta-2-microglobulin (B2M) from Mesocricetus auratus (Golden hamster).